The following is a 261-amino-acid chain: Uridylate kinase (261 aa).

The segment at methionine 1 to serine 23 is disordered. Residue lysine 36 to glycine 39 participates in ATP binding. UMP is bound at residue glycine 77. The ATP site is built by glycine 78 and arginine 82. UMP is bound by residues aspartate 97 and methionine 158–threonine 165. ATP is bound by residues phenylalanine 191 and aspartate 194.

Belongs to the UMP kinase family. As to quaternary structure, homohexamer.

It localises to the cytoplasm. It carries out the reaction UMP + ATP = UDP + ADP. It functions in the pathway pyrimidine metabolism; CTP biosynthesis via de novo pathway; UDP from UMP (UMPK route): step 1/1. With respect to regulation, inhibited by UTP. Functionally, catalyzes the reversible phosphorylation of UMP to UDP. The protein is Uridylate kinase of Mycobacterium tuberculosis (strain ATCC 25177 / H37Ra).